Consider the following 162-residue polypeptide: Peptide methionine sulfoxide reductase MsrA (162 aa).

Residue cysteine 10 is part of the active site.

The protein belongs to the MsrA Met sulfoxide reductase family.

It catalyses the reaction L-methionyl-[protein] + [thioredoxin]-disulfide + H2O = L-methionyl-(S)-S-oxide-[protein] + [thioredoxin]-dithiol. The enzyme catalyses [thioredoxin]-disulfide + L-methionine + H2O = L-methionine (S)-S-oxide + [thioredoxin]-dithiol. In terms of biological role, has an important function as a repair enzyme for proteins that have been inactivated by oxidation. Catalyzes the reversible oxidation-reduction of methionine sulfoxide in proteins to methionine. This chain is Peptide methionine sulfoxide reductase MsrA, found in Clostridium acetobutylicum (strain ATCC 824 / DSM 792 / JCM 1419 / IAM 19013 / LMG 5710 / NBRC 13948 / NRRL B-527 / VKM B-1787 / 2291 / W).